The following is a 570-amino-acid chain: Protein NRT1/ PTR FAMILY 8.1 (570 aa).

T98 is subject to Phosphothreonine. 10 helical membrane-spanning segments follow: residues 99–119 (IATF…SASV), 140–160 (AVFF…KPCV), 182–202 (FFNW…TVLV), 210–230 (WGWG…FFFF), 329–349 (IITL…YSQM), 377–397 (LFDT…IIPL), 414–434 (MGIG…LEVV), 454–474 (IFWQ…TFIG), 494–514 (LSLT…TVVM), and 537–557 (YFFY…LWIS).

It belongs to the major facilitator superfamily. Proton-dependent oligopeptide transporter (POT/PTR) (TC 2.A.17) family. In terms of tissue distribution, expressed in cotyledons, hypocotyls, leaves, roots, flowers, pistils and vascular tissue of sepals, anthers, carpels and funiculi. Not detected in seeds.

Its subcellular location is the cell membrane. Functionally, peptide transporter. Mediates the transport of di- and tripeptides. High affinity transporter with low selectivity. No transport of amino acids. This is Protein NRT1/ PTR FAMILY 8.1 (NPF8.1) from Arabidopsis thaliana (Mouse-ear cress).